The following is an 80-amino-acid chain: Gamma-conotoxin PnVIIA (80 aa).

Residues 1–19 (MEKLTILLLVAAVLMSTQA) form the signal peptide. The propeptide occupies 20 to 43 (QNQEQRQQAKINFLSKRKPSAERW). 3 cysteine pairs are disulfide-bonded: Cys47–Cys61, Cys54–Cys65, and Cys60–Cys70. At Glu59 the chain carries 4-carboxyglutamate. 4-carboxyglutamate is present on Glu71. Pro76 carries the 4-hydroxyproline modification. The propeptide occupies 78–80 (FGA).

As to expression, expressed by the venom duct.

It is found in the secreted. In terms of biological role, gamma-conotoxins may act on voltage-gated non-specific cation pacemaker channels (HCN). Triggers depolarization and firing of action potential bursts in the caudodorsal neurons of lymnaea. This effect is due to activation or enhancement of a slow inward cation current that may underlie endogenous bursting activity of these neurons. The sequence is that of Gamma-conotoxin PnVIIA from Conus pennaceus (Feathered cone).